The chain runs to 303 residues: Glycine--tRNA ligase alpha subunit (303 aa).

Belongs to the class-II aminoacyl-tRNA synthetase family. Tetramer of two alpha and two beta subunits.

The protein resides in the cytoplasm. It catalyses the reaction tRNA(Gly) + glycine + ATP = glycyl-tRNA(Gly) + AMP + diphosphate. In Bordetella pertussis (strain Tohama I / ATCC BAA-589 / NCTC 13251), this protein is Glycine--tRNA ligase alpha subunit.